The following is a 282-amino-acid chain: Cyanocobalamin reductase / alkylcobalamin dealkylase (282 aa).

Residues D104, 115-118 (ILAQ), 129-131 (YYQ), C149, and I160 each bind substrate. The tract at residues 234–282 (LGLAQPSEKPSSPSPDLPFTTPAPKKPGNPSRARSWLSPRVSPPASPGP) is disordered. S245, S247, S275, and S279 each carry phosphoserine.

This sequence belongs to the MMACHC family. In terms of assembly, monomer in the absence of bound substrate. Homodimer; dimerization is triggered by binding to FMN or adenosylcobalamin. Interacts with LMBRD1 and ABCD4; the interaction ensures the transport of cobalamin from the lysosome to the cytoplasm. Forms a multiprotein complex with MMADHC, MTR and MTRR; the interaction with MTR could modulate MMACHC-dependent processing of cobalamin. Heterodimer with MMADHC; the interaction might play a role in the regulation of the balance between AdoCbl and MeCbl synthesis. FAD serves as cofactor. FMN is required as a cofactor. In terms of tissue distribution, widely expressed. Expressed at higher level in fetal liver. Also expressed in spleen, lymph node, thymus and bone marrow. Weakly or not expressed in peripheral blood leukocytes.

It localises to the cytoplasm. The protein resides in the cytosol. The enzyme catalyses 2 cob(II)alamin-[cyanocobalamin reductase] + 2 hydrogen cyanide + NADP(+) = 2 cyanocob(III)alamin + 2 apo-[cyanocobalamin reductase] + NADPH + H(+). It carries out the reaction apo-[alkylcobalamin reductase] + an R-cob(III)alamin + glutathione = cob(I)alamin-[alkylcobalamin reductase] + an S-substituted glutathione + H(+). The catalysed reaction is apo-[alkylcobalamin reductase] + methylcob(III)alamin + glutathione = S-methyl glutathione + cob(I)alamin-[alkylcobalamin reductase] + H(+). It catalyses the reaction apo-[alkylcobalamin reductase] + adenosylcob(III)alamin + glutathione = S-adenosylglutathione + cob(I)alamin-[alkylcobalamin reductase] + H(+). Its function is as follows. Cobalamin (vitamin B12) cytosolic chaperone that catalyzes the reductive decyanation of cyanocob(III)alamin (cyanocobalamin, CNCbl) to yield cob(II)alamin and cyanide, using FAD or FMN as cofactors and NADPH as cosubstrate. Cyanocobalamin constitutes the inactive form of vitamin B12 introduced from the diet, and is converted into the active cofactors methylcobalamin (MeCbl) involved in methionine biosynthesis, and 5'-deoxyadenosylcobalamin (AdoCbl) involved in the TCA cycle. Forms a complex with the lysosomal transporter ABCD4 and its chaperone LMBRD1, to transport cobalamin across the lysosomal membrane into the cytosol. The processing of cobalamin in the cytosol occurs in a multiprotein complex composed of at least MMACHC, MMADHC, MTRR (methionine synthase reductase) and MTR (methionine synthase) which may contribute to shuttle safely and efficiently cobalamin towards MTR in order to produce methionine. Also acts as a glutathione transferase by catalyzing the dealkylation of the alkylcob(III)alamins MeCbl and AdoCbl, using the thiolate of glutathione for nucleophilic displacement to generate cob(I)alamin and the corresponding glutathione thioether. The conversion of incoming MeCbl or AdoCbl into a common intermediate cob(I)alamin is necessary to meet the cellular needs for both cofactors. Cysteine and homocysteine cannot substitute for glutathione in this reaction. The sequence is that of Cyanocobalamin reductase / alkylcobalamin dealkylase from Homo sapiens (Human).